A 453-amino-acid chain; its full sequence is Transmembrane protein 135 (453 aa).

The next 5 membrane-spanning stretches (helical) occupy residues 68–88 (LLQS…FFCI), 96–116 (FYFW…AILI), 149–169 (PIRH…MFFF), 293–313 (FQLG…SCFL), and 326–346 (LVAG…TISM).

The protein belongs to the TMEM135 family.

Its subcellular location is the mitochondrion membrane. It localises to the peroxisome membrane. In terms of biological role, involved in mitochondrial metabolism by regulating the balance between mitochondrial fusion and fission. May act as a regulator of mitochondrial fission that promotes DNM1L-dependent fission through activation of DNM1L. May be involved in peroxisome organization. This chain is Transmembrane protein 135 (tmem135), found in Xenopus laevis (African clawed frog).